The primary structure comprises 337 residues: Visual pigment-like receptor peropsin (337 aa).

At 1–26 (MLSEASDFNSSGSRSEGSVFSRTEHS) the chain is on the extracellular side. An N-linked (GlcNAc...) asparagine glycan is attached at N9. A helical membrane pass occupies residues 27–49 (VIAAYLIVAGITSILSNVVVLGI). Over 50–61 (FIKYKELRTPTN) the chain is Cytoplasmic. A helical membrane pass occupies residues 62–87 (AVIINLAFTDIGVSSIGYPMSAASDL). Over 88-101 (HGSWKFGHAGCQIY) the chain is Extracellular. C98 and C175 are disulfide-bonded. Residues 102–121 (AGLNIFFGMVSIGLLTVVAM) form a helical membrane-spanning segment. The Cytoplasmic segment spans residues 122–140 (DRYLTISCPDVGRRMTTNT). The helical transmembrane segment at 141–164 (YLSMILGAWINGLFWALMPIIGWA) threads the bilayer. Topologically, residues 165–188 (SYAPDPTGATCTINWRNNDTSFVS) are extracellular. N-linked (GlcNAc...) asparagine glycosylation occurs at N182. A helical membrane pass occupies residues 189–212 (YTMMVIVVNFIVPLTVMFYCYYHV). The Cytoplasmic segment spans residues 213 to 240 (SRSLRLYAASDCTAHLHRDWADQADVTK). A helical membrane pass occupies residues 241–264 (MSVIMILMFLLAWSPYSIVCLWAC). Topologically, residues 265–272 (FGNPKKIP) are extracellular. Residues 273–297 (PSMAIIAPLFAKSSTFYNPCIYVAA) traverse the membrane as a helical segment. An N6-(retinylidene)lysine modification is found at K284. The Cytoplasmic portion of the chain corresponds to 298–337 (HKKFRKAMLAMFKCQPHLAVPEPSTLPMDMPQSSLAPVRI).

Belongs to the G-protein coupled receptor 1 family. Opsin subfamily. As to expression, found only in the eye, where it is localized to the retinal pigment epithelium (RPE). In the RPE, it is localized to the microvilli that surround the photoreceptor outer segments.

Its subcellular location is the membrane. Functionally, may play a role in rpe physiology either by detecting light directly or by monitoring the concentration of retinoids or other photoreceptor-derived compounds. The sequence is that of Visual pigment-like receptor peropsin (Rrh) from Mus musculus (Mouse).